The sequence spans 221 residues: uncharacterized protein (221 aa).

Helical transmembrane passes span 41–63 (TGNI…HSLI), 78–100 (AVMY…SSLS), 141–163 (ILAY…ISFL), and 178–200 (LILR…VNLF).

The protein localises to the cell membrane. This is an uncharacterized protein from Archaeoglobus fulgidus (strain ATCC 49558 / DSM 4304 / JCM 9628 / NBRC 100126 / VC-16).